Consider the following 354-residue polypeptide: MLYLLAQWLHFEGFSNLIRYQTFRAGATLLTALVIGLIIGPRFINMLRVRQGKGQPIREDGPQSHLAKRGTPTMGGLMIVTALTLSLLLWMDVTSRLVWACAVVTLGFGLIGFLDDYDKVTKYAHKGVPAKVRLAGEFVVAAFAAWLAVGETNLYVPVFSNLYVPLGPFYYLFAIFVIVGAGNAVNLTDGLDGLAIMPVIIAAGTFAIIAYLAGRYDFATYLGIPHVKGAGELAIFCAAMMGAGLAFLWFNAPPAAVFMGDTGSLALGGALGVIAVAAHHEIVLAIVGGLFVMEAVSVIVQVAVYKRTGKRVFRMAPIHHHFEQLGWKESTVVIRFWIVSIVLALIGLATLKVR.

The next 10 helical transmembrane spans lie at 27-47 (ATLL…INML), 73-93 (TMGG…WMDV), 97-117 (LVWA…LDDY), 138-158 (FVVA…YVPV), 162-182 (LYVP…VGAG), 193-213 (GLAI…AYLA), 230-250 (AGEL…FLWF), 256-276 (AVFM…VIAV), 282-302 (IVLA…IVQV), and 331-351 (TVVI…LATL).

It belongs to the glycosyltransferase 4 family. MraY subfamily. Mg(2+) is required as a cofactor.

The protein resides in the cell inner membrane. The enzyme catalyses UDP-N-acetyl-alpha-D-muramoyl-L-alanyl-gamma-D-glutamyl-meso-2,6-diaminopimeloyl-D-alanyl-D-alanine + di-trans,octa-cis-undecaprenyl phosphate = di-trans,octa-cis-undecaprenyl diphospho-N-acetyl-alpha-D-muramoyl-L-alanyl-D-glutamyl-meso-2,6-diaminopimeloyl-D-alanyl-D-alanine + UMP. The protein operates within cell wall biogenesis; peptidoglycan biosynthesis. Functionally, catalyzes the initial step of the lipid cycle reactions in the biosynthesis of the cell wall peptidoglycan: transfers peptidoglycan precursor phospho-MurNAc-pentapeptide from UDP-MurNAc-pentapeptide onto the lipid carrier undecaprenyl phosphate, yielding undecaprenyl-pyrophosphoryl-MurNAc-pentapeptide, known as lipid I. In Novosphingobium aromaticivorans (strain ATCC 700278 / DSM 12444 / CCUG 56034 / CIP 105152 / NBRC 16084 / F199), this protein is Phospho-N-acetylmuramoyl-pentapeptide-transferase.